The primary structure comprises 705 residues: Ribosomal RNA large subunit methyltransferase K/L (705 aa).

Residues 42 to 154 (LAQKVCLSTR…RYGVSMYIDY (113 aa)) form the THUMP domain.

It belongs to the methyltransferase superfamily. RlmKL family.

It localises to the cytoplasm. The enzyme catalyses guanosine(2445) in 23S rRNA + S-adenosyl-L-methionine = N(2)-methylguanosine(2445) in 23S rRNA + S-adenosyl-L-homocysteine + H(+). It carries out the reaction guanosine(2069) in 23S rRNA + S-adenosyl-L-methionine = N(2)-methylguanosine(2069) in 23S rRNA + S-adenosyl-L-homocysteine + H(+). Its function is as follows. Specifically methylates the guanine in position 2445 (m2G2445) and the guanine in position 2069 (m7G2069) of 23S rRNA. This Pseudoalteromonas translucida (strain TAC 125) protein is Ribosomal RNA large subunit methyltransferase K/L.